The sequence spans 154 residues: Hexachlorocyclohexane dehydrochlorinase 1 (154 aa).

Residue aspartate 25 is part of the active site. Histidine 73 functions as the Proton acceptor in the catalytic mechanism.

The protein belongs to the HCH dehydrochlorinase family. As to quaternary structure, homotrimer.

The protein localises to the periplasm. The enzyme catalyses gamma-hexachlorocyclohexane = (3R,4S,5S,6R)-pentachlorocyclohexene + chloride + H(+). The catalysed reaction is (3R,4S,5S,6R)-pentachlorocyclohexene = (3R,6R)-1,3,4,6-tetrachlorocyclohexa-1,4-diene + chloride + H(+). It functions in the pathway xenobiotic degradation; hexachlorocyclohexane degradation. In terms of biological role, catalyzes the conversion of the important environmental pollutant gamma-hexachlorocyclohexane (gamma-HCH or lindane) to 1,3,4,6-tetrachloro-1,4-cyclohexadiene (1,4-TCDN) via gamma-pentachlorocyclohexene (gamma-PCCH). Proceeds by two successive 1,2-anti conformationally dependent dehydrochlorinations. Also shows activity with alpha- and delta-HCH, giving alpha- and delta-PCCH respectively, but not with the beta isomer. The chain is Hexachlorocyclohexane dehydrochlorinase 1 from Sphingobium indicum (strain DSM 16412 / CCM 7286 / MTCC 6364 / B90A).